A 382-amino-acid chain; its full sequence is Prophage ps2 probable integrase (382 aa).

The Core-binding (CB) domain maps to 63–142 (AKFTDIAEEW…TLNLIFDYAV (80 aa)). A Tyr recombinase domain is found at 170-376 (IQNKYLEQNE…TENMKSSIID (207 aa)). Catalysis depends on residues Arg-209, Lys-242, His-326, Arg-329, and His-352. The O-(3'-phospho-DNA)-tyrosine intermediate role is filled by Tyr-363.

This sequence belongs to the 'phage' integrase family.

In Lactococcus lactis subsp. lactis (strain IL1403) (Streptococcus lactis), this protein is Prophage ps2 probable integrase (ps201).